We begin with the raw amino-acid sequence, 264 residues long: MSSIHPTAVIGSGATIGEDVQIGPYTVIDDDVVIGDRTVIAPHVYIADGARIGSECRIHSGAVLSTAPQDLKYAGEKTELYVGDRTVIRECVTLNRGTKASGKTVVGSDNLLMAYVHAGHDCVIGNHVVIANSVQFGGHCEVGDYVVVGGLAGIHQFVRIGRYAMVGGISRGALDVPPFVMAGGHNSFRYEGLNVIGLKRRGFTSEQISTIRDVYRVIFQSGLLLSNALEAVRRDFEQTPEVKEILGFFASGAHGRKFLKPFNS.

The protein belongs to the transferase hexapeptide repeat family. LpxA subfamily. Homotrimer.

It is found in the cytoplasm. The catalysed reaction is a (3R)-hydroxyacyl-[ACP] + UDP-N-acetyl-alpha-D-glucosamine = a UDP-3-O-[(3R)-3-hydroxyacyl]-N-acetyl-alpha-D-glucosamine + holo-[ACP]. The protein operates within glycolipid biosynthesis; lipid IV(A) biosynthesis; lipid IV(A) from (3R)-3-hydroxytetradecanoyl-[acyl-carrier-protein] and UDP-N-acetyl-alpha-D-glucosamine: step 1/6. Its function is as follows. Involved in the biosynthesis of lipid A, a phosphorylated glycolipid that anchors the lipopolysaccharide to the outer membrane of the cell. The chain is Acyl-[acyl-carrier-protein]--UDP-N-acetylglucosamine O-acyltransferase from Chlorobaculum parvum (strain DSM 263 / NCIMB 8327) (Chlorobium vibrioforme subsp. thiosulfatophilum).